Consider the following 67-residue polypeptide: MLDPSIDSLMNKLDSKYTLVTVSARRAREMQIKKDQMIEHTISHKYVGKALEEIDAGLLSFEKEDRE.

The protein belongs to the RNA polymerase subunit omega family. As to quaternary structure, RNAP is composed of a core of 2 alpha, a beta and a beta' subunit. The core is associated with a delta subunit, and at least one of epsilon or omega. When a sigma factor is associated with the core the holoenzyme is formed, which can initiate transcription.

The enzyme catalyses RNA(n) + a ribonucleoside 5'-triphosphate = RNA(n+1) + diphosphate. In terms of biological role, promotes RNA polymerase assembly. Latches the N- and C-terminal regions of the beta' subunit thereby facilitating its interaction with the beta and alpha subunits. In vitro reconstitution experiments this subunit is dispensible. This chain is DNA-directed RNA polymerase subunit omega (rpoZ), found in Bacillus subtilis (strain 168).